We begin with the raw amino-acid sequence, 1053 residues long: Integrin alpha-3 (1053 aa).

Positions 1-32 are cleaved as a signal peptide; sequence MGPGPCRVPRAPGWLLRALALMVAACGRVAFA. Over 33–993 the chain is Extracellular; it reads FNLDTRFLVV…LVEELPAEIE (961 aa). FG-GAP repeat units lie at residues 38–103, 110–171, 185–235, 236–293, 294–355, 357–412, and 416–478; these read RFLV…KDDC, EKSD…DLQL, CNSN…WDLS, EYSY…GGDL, QRKQ…ASFP, QPSL…GLLR, and QIIH…VARP. N-linked (GlcNAc...) asparagine glycosylation occurs at asparagine 86. Disulfide bonds link cysteine 94–cysteine 103, cysteine 140–cysteine 162, and cysteine 185–cysteine 197. Cystine bridges form between cysteine 486/cysteine 491 and cysteine 497/cysteine 551. N-linked (GlcNAc...) asparagine glycans are attached at residues asparagine 501, asparagine 512, asparagine 574, and asparagine 606. A disulfide bond links cysteine 616 and cysteine 622. N-linked (GlcNAc...) asparagine glycans are attached at residues asparagine 657, asparagine 699, asparagine 843, and asparagine 859. Cysteine 695 and cysteine 704 form a disulfide bridge. 2 disulfide bridges follow: cysteine 848–cysteine 906 and cysteine 913–cysteine 918. Positions 865–890 are disordered; sequence PGVTPLSPQRRRRQLDPGGDQSSPPV. Residues asparagine 925, asparagine 928, asparagine 937, and asparagine 971 are each glycosylated (N-linked (GlcNAc...) asparagine). The helical transmembrane segment at 994-1021 threads the bilayer; that stretch reads LWLVLVAVGAGLLLLGLIILLLWKCGFF. A lipid anchor (S-palmitoyl cysteine) is attached at cysteine 1018. Topologically, residues 1022 to 1053 are cytoplasmic; the sequence is KRARTRALYEAKRQKAEMKSQPSETERLTDDY.

Belongs to the integrin alpha chain family. In terms of assembly, heterodimer of an alpha and a beta subunit. The alpha subunit is composed of a heavy and a light chain linked by a disulfide bond. Alpha-3 associates with beta-1. Interacts with HPS5. Interacts with FAP (seprase); the interaction occurs at the cell surface of invadopodia membrane in a collagen-dependent manner. In terms of tissue distribution, isoform 1 and isoform 2 are expressed in heart and brain. Only isoform 1 is detected in lung.

Its subcellular location is the cell membrane. It is found in the cell projection. The protein resides in the invadopodium membrane. The protein localises to the filopodium membrane. In terms of biological role, integrin alpha-3/beta-1 is a receptor for fibronectin, laminin, collagen, epiligrin, thrombospondin and CSPG4. Integrin alpha-3/beta-1 provides a docking site for FAP (seprase) at invadopodia plasma membranes in a collagen-dependent manner and hence may participate in the adhesion, formation of invadopodia and matrix degradation processes, promoting cell invasion. Alpha-3/beta-1 may mediate with LGALS3 the stimulation by CSPG4 of endothelial cells migration. This is Integrin alpha-3 (Itga3) from Mus musculus (Mouse).